A 1166-amino-acid polypeptide reads, in one-letter code: Folliculin-interacting protein 1 (1166 aa).

The uDENN FNIP1/2-type domain maps to 37–478 (FDPSQIRLIV…TVMPNGQPPI (442 aa)). 4 positions are modified to phosphoserine; by AMPK: serine 220, serine 230, serine 232, and serine 261. A Phosphothreonine modification is found at threonine 294. At serine 296 the chain carries Phosphoserine. Positions 486-1092 (SSQSVDMLAK…VSNLLHSTLQ (607 aa)) constitute a cDENN FNIP1/2-type domain. Residue serine 593 is modified to Phosphoserine; by AMPK. Serine 594 is modified (phosphoserine). Residues cysteine 608 and cysteine 610 each contribute to the Zn(2+) site. The short motif at 608-615 (CNCKYCSH) is the Cys degron element. A KY-finger region spans residues 611-612 (KY). Residues cysteine 613 and histidine 615 each contribute to the Zn(2+) site. A phosphoserine mark is found at serine 760 and serine 763. 2 disordered regions span residues 781–817 (TKPL…VSEE) and 912–956 (LVPH…HDMT). Basic and acidic residues-rich tracts occupy residues 783-805 (PLKE…KDQS) and 915-925 (HGDKESSDKKI). The interaction with HSP90AA1 stretch occupies residues 929 to 1166 (TEWDIPRNES…HSPYVAQILL (238 aa)). Residue serine 938 is modified to Phosphoserine; alternate; by CK2. Residue serine 938 is glycosylated (O-linked (GlcNAc) serine; alternate). A phosphoserine; by CK2 mark is found at serine 939, serine 941, serine 946, and serine 948. The dDENN FNIP1/2-type domain maps to 1102–1157 (FCVMHLEDRLQELYFKSKMLSEYLRGQMRVHVKELGVVLGIESSDLPLLAAVASTH). Lysine 1119 is covalently cross-linked (Glycyl lysine isopeptide (Lys-Gly) (interchain with G-Cter in ubiquitin)).

The protein belongs to the FNIP family. As to quaternary structure, homodimer and homomultimer. Heterodimer and heteromultimer with FNIP2. Interacts with FLCN (via C-terminus). Component of the lysosomal folliculin complex (LFC), composed of FLCN, FNIP1 (or FNIP2), RagA/RRAGA or RagB/RRAGB GDP-bound, RagC/RRAGC or RagD/RRAGD GTP-bound, and Ragulator. Interacts with HSPCA and with the PRKAA1, PRKAB1 and PRKAG1 subunits of 5'-AMP-activated protein kinase (AMPK). Phosphorylated FLCN and AMPK are preferentially bound. Interacts with HSP70, STIP1, PTGES3, CDC37, BRAF, GCR and CDK4. Interacts with HSP90AA1; the interaction inhibits HSP90AA1 ATPase activity. Interacts with ATP2A2. Phosphorylated by AMPK in response to energetic stress. Phosphorylation by AMPK in response to mitochondrial damage promotes inactivation of the non-canonical mTORC1 signaling, nuclear translocation of TFEB and TFE3, inducing transcription of lysosomal or autophagy genes. Sequential phosphorylation by CK2 promotes its gradual interaction with HSP90AA1/Hsp90. Priming phosphorylation at Ser-938 is followed by relay phosphorylation at Ser-939, Ser-941, Ser-946 and Ser-948, promoting its gradual interaction with HSP90AA1/Hsp90. This leads to incremental inhibition of HSP90AA1/Hsp90 ATPase activity and gradual activation of both kinase and non-kinase clients. Dephosphorylated by protein phosphatase 5 (PP5), promoting glycosylation by OGT. Post-translationally, glcNAcylation at Ser-938 by OGT following dephosphorylation by protein phosphatase 5 (PP5) promotes ubiquitination and degradation by the proteasome. In terms of processing, ubiquitinated through 'Lys-11' linkage of ubiquitin moieties at Lys-1119 following glycosylation by OGT, leading to its degradation by the proteasome. Ubiquitinated by the CRL2(FEM1B) complex in response to reductive stress: reductive stress causes reduction of the conserved Cys degron in FNIP1, followed by zinc-binding, zinc acting as a molecular glue for recognition by the CRL2(FEM1B) complex. Ubiquitination leads to FNIP1 degradation, and activation of mitochondria to recalibrate reactive oxygen species (ROS). Oxidation of the Cys degron in normal conditions promotes its stabilization by preventing recognition and ubiquitination by the CRL2(FEM1B) complex. As to expression, strong expression is found in the heart, liver placenta, muscle, nasal mucosa, salivary gland and uvula and moderate expression in kidney and lung. Higher levels detected in clear cell renal cell carcinoma (RCC) and chromophobe RCC than in normal kidney tissue. Expressed in peripheral blood mononuclear cells.

The protein localises to the lysosome membrane. It is found in the cytoplasm. It localises to the cytosol. Binding partner of the GTPase-activating protein FLCN: involved in the cellular response to amino acid availability by regulating the non-canonical mTORC1 signaling cascade controlling the MiT/TFE factors TFEB and TFE3. Required to promote FLCN recruitment to lysosomes and interaction with Rag GTPases, leading to activation of the non-canonical mTORC1 signaling. In low-amino acid conditions, component of the lysosomal folliculin complex (LFC) on the membrane of lysosomes, which inhibits the GTPase-activating activity of FLCN, thereby inactivating mTORC1 and promoting nuclear translocation of TFEB and TFE3. Upon amino acid restimulation, disassembly of the LFC complex liberates the GTPase-activating activity of FLCN, leading to activation of mTORC1 and subsequent inactivation of TFEB and TFE3. Together with FLCN, regulates autophagy: following phosphorylation by ULK1, interacts with GABARAP and promotes autophagy. In addition to its role in mTORC1 signaling, also acts as a co-chaperone of HSP90AA1/Hsp90: following gradual phosphorylation by CK2, inhibits the ATPase activity of HSP90AA1/Hsp90, leading to activate both kinase and non-kinase client proteins of HSP90AA1/Hsp90. Acts as a scaffold to load client protein FLCN onto HSP90AA1/Hsp90. Competes with the activating co-chaperone AHSA1 for binding to HSP90AA1, thereby providing a reciprocal regulatory mechanism for chaperoning of client proteins. Also acts as a core component of the reductive stress response by inhibiting activation of mitochondria in normal conditions: in response to reductive stress, the conserved Cys degron is reduced, leading to recognition and polyubiquitylation by the CRL2(FEM1B) complex, followed by proteasomal. Required for B-cell development. The sequence is that of Folliculin-interacting protein 1 from Homo sapiens (Human).